Reading from the N-terminus, the 307-residue chain is Aspartate carbamoyltransferase catalytic subunit (307 aa).

The carbamoyl phosphate site is built by Arg59 and Thr60. Residue Lys87 coordinates L-aspartate. Carbamoyl phosphate contacts are provided by Arg109, His137, and Gln140. Residues Arg173 and Arg223 each coordinate L-aspartate. 2 residues coordinate carbamoyl phosphate: Gly266 and Pro267.

This sequence belongs to the aspartate/ornithine carbamoyltransferase superfamily. ATCase family. Heterododecamer (2C3:3R2) of six catalytic PyrB chains organized as two trimers (C3), and six regulatory PyrI chains organized as three dimers (R2).

It carries out the reaction carbamoyl phosphate + L-aspartate = N-carbamoyl-L-aspartate + phosphate + H(+). The protein operates within pyrimidine metabolism; UMP biosynthesis via de novo pathway; (S)-dihydroorotate from bicarbonate: step 2/3. In terms of biological role, catalyzes the condensation of carbamoyl phosphate and aspartate to form carbamoyl aspartate and inorganic phosphate, the committed step in the de novo pyrimidine nucleotide biosynthesis pathway. This chain is Aspartate carbamoyltransferase catalytic subunit, found in Helicobacter pylori (strain Shi470).